Here is a 532-residue protein sequence, read N- to C-terminus: CTP synthase (532 aa).

Positions 1–267 (MTKYIFVTGG…DDIVLEHLQL (267 aa)) are amidoligase domain. S13 provides a ligand contact to CTP. A UTP-binding site is contributed by S13. ATP is bound at residue 14–19 (SIGKGI). Y54 is an L-glutamine binding site. Position 71 (D71) interacts with ATP. Mg(2+) contacts are provided by D71 and E141. CTP is bound by residues 148-150 (DIE), 188-193 (KTKPTQ), and K224. Residues 188–193 (KTKPTQ) and K224 contribute to the UTP site. In terms of domain architecture, Glutamine amidotransferase type-1 spans 292-532 (RIGLVGKYVS…DFVGAALNNK (241 aa)). G354 serves as a coordination point for L-glutamine. The Nucleophile; for glutamine hydrolysis role is filled by C381. L-glutamine-binding positions include 382–385 (LGMQ), E405, and R462. Catalysis depends on residues H507 and E509.

It belongs to the CTP synthase family. In terms of assembly, homotetramer.

It carries out the reaction UTP + L-glutamine + ATP + H2O = CTP + L-glutamate + ADP + phosphate + 2 H(+). It catalyses the reaction L-glutamine + H2O = L-glutamate + NH4(+). The enzyme catalyses UTP + NH4(+) + ATP = CTP + ADP + phosphate + 2 H(+). It participates in pyrimidine metabolism; CTP biosynthesis via de novo pathway; CTP from UDP: step 2/2. With respect to regulation, allosterically activated by GTP, when glutamine is the substrate; GTP has no effect on the reaction when ammonia is the substrate. The allosteric effector GTP functions by stabilizing the protein conformation that binds the tetrahedral intermediate(s) formed during glutamine hydrolysis. Inhibited by the product CTP, via allosteric rather than competitive inhibition. Catalyzes the ATP-dependent amination of UTP to CTP with either L-glutamine or ammonia as the source of nitrogen. Regulates intracellular CTP levels through interactions with the four ribonucleotide triphosphates. The protein is CTP synthase of Listeria monocytogenes serotype 4b (strain F2365).